The sequence spans 120 residues: MSAVHENEARRRQRLRYQIRLKAHGRPRLSVFRSGKHIYAQVIDDAAGRTLAAASSLDAGLRSALKTGADKAAAAAVGKLVAERAKEAGVTQVVFDRGAYMYHGRVKALAEAARESGLDF.

It belongs to the universal ribosomal protein uL18 family. Part of the 50S ribosomal subunit; part of the 5S rRNA/L5/L18/L25 subcomplex. Contacts the 5S and 23S rRNAs.

This is one of the proteins that bind and probably mediate the attachment of the 5S RNA into the large ribosomal subunit, where it forms part of the central protuberance. This Acidiphilium cryptum (strain JF-5) protein is Large ribosomal subunit protein uL18.